The following is a 209-amino-acid chain: Ribosomal RNA large subunit methyltransferase E (209 aa).

S-adenosyl-L-methionine-binding residues include glycine 63, tryptophan 65, aspartate 83, aspartate 99, and aspartate 124. Lysine 164 acts as the Proton acceptor in catalysis.

Belongs to the class I-like SAM-binding methyltransferase superfamily. RNA methyltransferase RlmE family.

It localises to the cytoplasm. The enzyme catalyses uridine(2552) in 23S rRNA + S-adenosyl-L-methionine = 2'-O-methyluridine(2552) in 23S rRNA + S-adenosyl-L-homocysteine + H(+). Specifically methylates the uridine in position 2552 of 23S rRNA at the 2'-O position of the ribose in the fully assembled 50S ribosomal subunit. This Aeromonas hydrophila subsp. hydrophila (strain ATCC 7966 / DSM 30187 / BCRC 13018 / CCUG 14551 / JCM 1027 / KCTC 2358 / NCIMB 9240 / NCTC 8049) protein is Ribosomal RNA large subunit methyltransferase E.